The primary structure comprises 393 residues: Lipid-A-disaccharide synthase (393 aa).

It belongs to the LpxB family.

The catalysed reaction is a lipid X + a UDP-2-N,3-O-bis[(3R)-3-hydroxyacyl]-alpha-D-glucosamine = a lipid A disaccharide + UDP + H(+). It functions in the pathway bacterial outer membrane biogenesis; LPS lipid A biosynthesis. In terms of biological role, condensation of UDP-2,3-diacylglucosamine and 2,3-diacylglucosamine-1-phosphate to form lipid A disaccharide, a precursor of lipid A, a phosphorylated glycolipid that anchors the lipopolysaccharide to the outer membrane of the cell. This Actinobacillus pleuropneumoniae serotype 7 (strain AP76) protein is Lipid-A-disaccharide synthase.